Consider the following 214-residue polypeptide: Adenylate kinase (214 aa).

10 to 15 (GSGKGT) serves as a coordination point for ATP. The segment at 30–59 (STGDMLRAAVREGTPLGMEAKKIMDAGQLV) is NMP. AMP contacts are provided by residues threonine 31, arginine 36, 57–59 (QLV), 85–88 (GFPR), and glutamine 92. The segment at 122-159 (GRRVHPASGRTYHVVFNPPKVEGRDDETGEPLVQREDD) is LID. ATP-binding positions include arginine 123 and 132-133 (TY). Residues arginine 156 and arginine 167 each contribute to the AMP site. ATP is bound at residue glycine 200.

The protein belongs to the adenylate kinase family. As to quaternary structure, monomer.

It localises to the cytoplasm. The catalysed reaction is AMP + ATP = 2 ADP. It functions in the pathway purine metabolism; AMP biosynthesis via salvage pathway; AMP from ADP: step 1/1. Catalyzes the reversible transfer of the terminal phosphate group between ATP and AMP. Plays an important role in cellular energy homeostasis and in adenine nucleotide metabolism. This chain is Adenylate kinase, found in Methylococcus capsulatus (strain ATCC 33009 / NCIMB 11132 / Bath).